The following is a 227-amino-acid chain: Uracil-DNA glycosylase (227 aa).

Asp68 (proton acceptor) is an active-site residue.

This sequence belongs to the uracil-DNA glycosylase (UDG) superfamily. UNG family.

It localises to the cytoplasm. It carries out the reaction Hydrolyzes single-stranded DNA or mismatched double-stranded DNA and polynucleotides, releasing free uracil.. Its function is as follows. Excises uracil residues from the DNA which can arise as a result of misincorporation of dUMP residues by DNA polymerase or due to deamination of cytosine. This is Uracil-DNA glycosylase from Mycobacterium leprae (strain Br4923).